A 221-amino-acid polypeptide reads, in one-letter code: Orotate phosphoribosyltransferase (221 aa).

Lys26 is a binding site for 5-phospho-alpha-D-ribose 1-diphosphate. Position 34–35 (34–35 (FF)) interacts with orotate. 5-phospho-alpha-D-ribose 1-diphosphate-binding positions include 72-73 (YK), Arg99, Lys100, Lys103, His105, and 124-132 (DDVITAGTA). Positions 128 and 156 each coordinate orotate.

The protein belongs to the purine/pyrimidine phosphoribosyltransferase family. PyrE subfamily. Homodimer. Requires Mg(2+) as cofactor.

It catalyses the reaction orotidine 5'-phosphate + diphosphate = orotate + 5-phospho-alpha-D-ribose 1-diphosphate. It functions in the pathway pyrimidine metabolism; UMP biosynthesis via de novo pathway; UMP from orotate: step 1/2. Its function is as follows. Catalyzes the transfer of a ribosyl phosphate group from 5-phosphoribose 1-diphosphate to orotate, leading to the formation of orotidine monophosphate (OMP). The protein is Orotate phosphoribosyltransferase of Colwellia psychrerythraea (strain 34H / ATCC BAA-681) (Vibrio psychroerythus).